Reading from the N-terminus, the 284-residue chain is Signal peptidase I (284 aa).

A helical membrane pass occupies residues 4–22 (NFPLLLVIAVAVCGLLALL). The Cytoplasmic portion of the chain corresponds to 23–58 (DLVFFAPRRRSAIASYQGSVSQPDAVVIEKLNKEPL). Residues 59 to 77 (LVEYGKSFFPVLFIVLVLR) traverse the membrane as a helical segment. Residues 78-284 (SFLVEPFQIP…PNFSRVGLIK (207 aa)) are Periplasmic-facing. Residues Ser90 and Lys145 contribute to the active site.

The protein belongs to the peptidase S26 family.

Its subcellular location is the cell inner membrane. It carries out the reaction Cleavage of hydrophobic, N-terminal signal or leader sequences from secreted and periplasmic proteins.. This chain is Signal peptidase I (lepB), found in Pseudomonas fluorescens.